We begin with the raw amino-acid sequence, 448 residues long: Ribosomal protein uS12 methylthiotransferase RimO (448 aa).

Positions 16-126 constitute an MTTase N-terminal domain; that stretch reads PKISFVSLGC…VVAAVHEAVP (111 aa). Residues C25, C61, C90, C157, C161, and C164 each contribute to the [4Fe-4S] cluster site. The region spanning 143 to 380 is the Radical SAM core domain; the sequence is LTPRHYAYLK…METQNGIALR (238 aa). Positions 383–448 constitute a TRAM domain; that stretch reads RAKVGKRLPV…EAYDLYGSVA (66 aa).

The protein belongs to the methylthiotransferase family. RimO subfamily. It depends on [4Fe-4S] cluster as a cofactor.

The protein localises to the cytoplasm. It carries out the reaction L-aspartate(89)-[ribosomal protein uS12]-hydrogen + (sulfur carrier)-SH + AH2 + 2 S-adenosyl-L-methionine = 3-methylsulfanyl-L-aspartate(89)-[ribosomal protein uS12]-hydrogen + (sulfur carrier)-H + 5'-deoxyadenosine + L-methionine + A + S-adenosyl-L-homocysteine + 2 H(+). Functionally, catalyzes the methylthiolation of an aspartic acid residue of ribosomal protein uS12. This is Ribosomal protein uS12 methylthiotransferase RimO from Methylobacterium radiotolerans (strain ATCC 27329 / DSM 1819 / JCM 2831 / NBRC 15690 / NCIMB 10815 / 0-1).